A 165-amino-acid polypeptide reads, in one-letter code: Large ribosomal subunit protein uL22c (165 aa).

Belongs to the universal ribosomal protein uL22 family. As to quaternary structure, part of the 50S ribosomal subunit.

The protein resides in the plastid. The protein localises to the chloroplast. This protein binds specifically to 23S rRNA. Functionally, the globular domain of the protein is located near the polypeptide exit tunnel on the outside of the subunit, while an extended beta-hairpin is found that lines the wall of the exit tunnel in the center of the 70S ribosome. The protein is Large ribosomal subunit protein uL22c (rpl22) of Daucus carota (Wild carrot).